A 388-amino-acid chain; its full sequence is Putative C-&gt;U-editing enzyme APOBEC-4 (388 aa).

Residues proline 60–leucine 176 form the CMP/dCMP-type deaminase domain. Histidine 92 contacts Zn(2+). The active-site Proton donor is glutamate 94. Zn(2+)-binding residues include cysteine 126 and cysteine 133. A disordered region spans residues lysine 322–serine 356.

It belongs to the cytidine and deoxycytidylate deaminase family. The cofactor is Zn(2+).

Its function is as follows. Putative C to U editing enzyme whose physiological substrate is not yet known. In Rattus norvegicus (Rat), this protein is Putative C-&gt;U-editing enzyme APOBEC-4 (Apobec4).